The following is a 138-amino-acid chain: Transcription antitermination protein NusB (138 aa).

Belongs to the NusB family.

Functionally, involved in transcription antitermination. Required for transcription of ribosomal RNA (rRNA) genes. Binds specifically to the boxA antiterminator sequence of the ribosomal RNA (rrn) operons. The protein is Transcription antitermination protein NusB of Desulforudis audaxviator (strain MP104C).